The sequence spans 78 residues: Mitochondrial import inner membrane translocase subunit Tim9 (78 aa).

The Twin CX3C motif motif lies at 24–48 (CFTSCVNEFGSRTVNAKEESCANNC). 2 disulfide bridges follow: Cys-24–Cys-48 and Cys-28–Cys-44.

Belongs to the small Tim family. As to quaternary structure, heterohexamer; composed of 3 copies of tim-9/tin-9.1 and 3 copies of tim-10/tin-10, named soluble 70 kDa complex. The complex associates with the tim-22 component of the TIM22 complex. Interacts with multi-pass transmembrane proteins in transit.

Its subcellular location is the mitochondrion inner membrane. Its function is as follows. Mitochondrial intermembrane chaperone that participates in the import and insertion of multi-pass transmembrane proteins into the mitochondrial inner membrane. May also be required for the transfer of beta-barrel precursors from the TOM complex to the sorting and assembly machinery (SAM complex) of the outer membrane. Acts as a chaperone-like protein that protects the hydrophobic precursors from aggregation and guide them through the mitochondrial intermembrane space. This is Mitochondrial import inner membrane translocase subunit Tim9 (tin-9.1) from Caenorhabditis briggsae.